A 620-amino-acid polypeptide reads, in one-letter code: uncharacterized protein (620 aa).

A run of 4 helical transmembrane segments spans residues 66–86 (LLNF…NQII), 238–258 (FFDA…NLLW), 546–566 (LGII…VWTI), and 584–604 (IIFI…ILVF).

It is found in the cell membrane. This is an uncharacterized protein from Mycoplasma genitalium (strain ATCC 33530 / DSM 19775 / NCTC 10195 / G37) (Mycoplasmoides genitalium).